The primary structure comprises 388 residues: Pentatricopeptide repeat-containing protein 2, mitochondrial (388 aa).

The stretch at 166 to 200 (TSFNILMDMLFIKGKYKSALQVLIEMKNQDVKFTK) is one PPR repeat. Ser382 carries the phosphoserine modification.

This sequence belongs to the PTCD2 family.

It localises to the mitochondrion. In terms of biological role, involved in mitochondrial RNA maturation and mitochondrial respiratory chain function. The chain is Pentatricopeptide repeat-containing protein 2, mitochondrial (PTCD2) from Homo sapiens (Human).